A 248-amino-acid chain; its full sequence is Ribosomal RNA small subunit methyltransferase J (248 aa).

Residues 101-102 (RD), 117-118 (ER), 153-154 (SS), and Asp171 contribute to the S-adenosyl-L-methionine site.

It belongs to the methyltransferase superfamily. RsmJ family.

It is found in the cytoplasm. The catalysed reaction is guanosine(1516) in 16S rRNA + S-adenosyl-L-methionine = N(2)-methylguanosine(1516) in 16S rRNA + S-adenosyl-L-homocysteine + H(+). Functionally, specifically methylates the guanosine in position 1516 of 16S rRNA. This Proteus mirabilis (strain HI4320) protein is Ribosomal RNA small subunit methyltransferase J.